Reading from the N-terminus, the 401-residue chain is NADH-quinone oxidoreductase subunit D (401 aa).

Belongs to the complex I 49 kDa subunit family. NDH-1 is composed of 15 different subunits. Subunits NuoB, C, D, E, F, and G constitute the peripheral sector of the complex.

It is found in the cell membrane. It catalyses the reaction a quinone + NADH + 5 H(+)(in) = a quinol + NAD(+) + 4 H(+)(out). Functionally, NDH-1 shuttles electrons from NADH, via FMN and iron-sulfur (Fe-S) centers, to quinones in the respiratory chain. The immediate electron acceptor for the enzyme in this species is believed to be a menaquinone. Couples the redox reaction to proton translocation (for every two electrons transferred, four hydrogen ions are translocated across the cytoplasmic membrane), and thus conserves the redox energy in a proton gradient. This Deinococcus radiodurans (strain ATCC 13939 / DSM 20539 / JCM 16871 / CCUG 27074 / LMG 4051 / NBRC 15346 / NCIMB 9279 / VKM B-1422 / R1) protein is NADH-quinone oxidoreductase subunit D.